Here is a 321-residue protein sequence, read N- to C-terminus: Phospholipid phosphatase-related protein type 5 (321 aa).

Transmembrane regions (helical) follow at residues Ser10 to Phe30, Ala62 to Val82, Phe122 to Val142, Ala196 to Thr213, Val225 to Tyr245, and Val252 to Asn272.

This sequence belongs to the PA-phosphatase related phosphoesterase family. As to expression, isoform 1 is expressed in brain, lung, kidney and colon. Isoform 2 is expressed in placenta, skeletal muscle and kidney.

The protein resides in the cell membrane. Functionally, induces filopodia formation and promotes neurite growth in a CDC42-independent manner; impedes neurite growth inhibitory-mediated axonal retraction. The sequence is that of Phospholipid phosphatase-related protein type 5 from Homo sapiens (Human).